Reading from the N-terminus, the 397-residue chain is (S)-8-oxocitronellyl enol synthase ISY2 (397 aa).

Residues 36-38 (TGL), 64-65 (RR), 82-83 (DV), 106-107 (TW), Gln144, Tyr180, Ile207, and 214-216 (SMM) contribute to the NADP(+) site. The active site involves Tyr180.

It belongs to the short-chain dehydrogenases/reductases (SDR) family.

The enzyme catalyses (S)-8-oxocitronellyl enol + NADP(+) = (6E)-8-oxogeranial + NADPH + H(+). It carries out the reaction (S)-8-oxocitronellyl enol + NAD(+) = (6E)-8-oxogeranial + NADH + H(+). Its function is as follows. Iridoid synthase that catalyzes the first step in generation of the iridoid ring scaffold using the linear monoterpene (6E)-8-oxogeranial as substrate. Iridoids comprise a large family of distinctive bicyclic monoterpenes that possess a wide range of pharmacological activities, including anticancer, anti-inflammatory, antifungal and antibacterial activities. Catalyzes the conversion of the linear monoterpene (6E)-8-oxogeranial to (S)-8-oxocitronellyl enol, a precursor of nepetalactones, which are metabolites that are both insect-repellent and have euphoric effect in cats. This chain is (S)-8-oxocitronellyl enol synthase ISY2, found in Nepeta cataria (Catnip).